A 199-amino-acid polypeptide reads, in one-letter code: Nitrile hydratase subunit alpha (199 aa).

Cysteine 102, cysteine 105, serine 106, and cysteine 107 together coordinate Fe(3+). At cysteine 105 the chain carries Cysteine sulfinic acid (-SO2H). Cysteine 107 is modified (cysteine sulfenic acid (-SOH)).

The protein belongs to the nitrile hydratase subunit alpha family. Heterodimer of an alpha and a beta chain. It depends on Fe(3+) as a cofactor. Oxidation on Cys-105 is essential for the activity. Post-translationally, oxidation on Cys-107 stabilizes the Fe-NO ligand coordinated in the inactive form.

The catalysed reaction is an aliphatic primary amide = an aliphatic nitrile + H2O. With respect to regulation, inactivated by oxidation of Cys-107 to a sulfenic acid. NHase catalyzes the hydration of various nitrile compounds to the corresponding amides. Industrial production of acrylamide is now being developed using some of the enzymes of this class. The sequence is that of Nitrile hydratase subunit alpha (nthA) from Rhodococcus sp.